The primary structure comprises 185 residues: Elongation factor P (185 aa).

Belongs to the elongation factor P family.

The protein localises to the cytoplasm. It participates in protein biosynthesis; polypeptide chain elongation. In terms of biological role, involved in peptide bond synthesis. Stimulates efficient translation and peptide-bond synthesis on native or reconstituted 70S ribosomes in vitro. Probably functions indirectly by altering the affinity of the ribosome for aminoacyl-tRNA, thus increasing their reactivity as acceptors for peptidyl transferase. The sequence is that of Elongation factor P from Nostoc punctiforme (strain ATCC 29133 / PCC 73102).